The primary structure comprises 276 residues: Non-heme chloroperoxidase (276 aa).

An AB hydrolase-1 domain is found at Pro-24–Leu-254. Active-site residues include Ser-97, Asp-227, and His-256.

This sequence belongs to the AB hydrolase superfamily. Bacterial non-heme haloperoxidase / perhydrolase family. Homodimer.

The chain is Non-heme chloroperoxidase (cpo) from Streptomyces lividans.